Consider the following 164-residue polypeptide: Protein-export protein SecB (164 aa).

The protein belongs to the SecB family. As to quaternary structure, homotetramer, a dimer of dimers. One homotetramer interacts with 1 SecA dimer.

It localises to the cytoplasm. In terms of biological role, one of the proteins required for the normal export of preproteins out of the cell cytoplasm. It is a molecular chaperone that binds to a subset of precursor proteins, maintaining them in a translocation-competent state. It also specifically binds to its receptor SecA. The chain is Protein-export protein SecB from Ruegeria sp. (strain TM1040) (Silicibacter sp.).